Reading from the N-terminus, the 509-residue chain is uncharacterized protein (509 aa).

The RNase NYN domain maps to Arg358–Glu480.

This is an uncharacterized protein from Methanocaldococcus jannaschii (strain ATCC 43067 / DSM 2661 / JAL-1 / JCM 10045 / NBRC 100440) (Methanococcus jannaschii).